Here is a 300-residue protein sequence, read N- to C-terminus: Bifunctional protein FolD 2 (300 aa).

NADP(+)-binding positions include 165–167 (GRS), S190, and I231.

This sequence belongs to the tetrahydrofolate dehydrogenase/cyclohydrolase family. In terms of assembly, homodimer.

The enzyme catalyses (6R)-5,10-methylene-5,6,7,8-tetrahydrofolate + NADP(+) = (6R)-5,10-methenyltetrahydrofolate + NADPH. The catalysed reaction is (6R)-5,10-methenyltetrahydrofolate + H2O = (6R)-10-formyltetrahydrofolate + H(+). It participates in one-carbon metabolism; tetrahydrofolate interconversion. In terms of biological role, catalyzes the oxidation of 5,10-methylenetetrahydrofolate to 5,10-methenyltetrahydrofolate and then the hydrolysis of 5,10-methenyltetrahydrofolate to 10-formyltetrahydrofolate. The chain is Bifunctional protein FolD 2 from Pseudomonas syringae pv. syringae (strain B728a).